Reading from the N-terminus, the 353-residue chain is DNA-directed RNA polymerase subunit alpha (353 aa).

Positions 1–245 (MEKIQKITYK…AHFQIIGNIN (245 aa)) are alpha N-terminal domain (alpha-NTD). The segment at 261–353 (EREIKSTTPI…QLNNSEEGEE (93 aa)) is alpha C-terminal domain (alpha-CTD).

It belongs to the RNA polymerase alpha chain family. Homodimer. The RNAP catalytic core consists of 2 alpha, 1 beta, 1 beta' and 1 omega subunit. When a sigma factor is associated with the core the holoenzyme is formed, which can initiate transcription.

It catalyses the reaction RNA(n) + a ribonucleoside 5'-triphosphate = RNA(n+1) + diphosphate. In terms of biological role, DNA-dependent RNA polymerase catalyzes the transcription of DNA into RNA using the four ribonucleoside triphosphates as substrates. This is DNA-directed RNA polymerase subunit alpha from Mycoplasma sp.